The sequence spans 160 residues: Cytochrome c-type biogenesis protein CcmE (160 aa).

Topologically, residues M1–R8 are cytoplasmic. Residues L9–A29 form a helical; Signal-anchor for type II membrane protein membrane-spanning segment. The Periplasmic portion of the chain corresponds to L30 to S160. The heme site is built by H130 and Y134. Basic and acidic residues predominate over residues K133–P148. Residues K133 to S160 are disordered.

It belongs to the CcmE/CycJ family.

The protein localises to the cell inner membrane. Functionally, heme chaperone required for the biogenesis of c-type cytochromes. Transiently binds heme delivered by CcmC and transfers the heme to apo-cytochromes in a process facilitated by CcmF and CcmH. This is Cytochrome c-type biogenesis protein CcmE from Erwinia tasmaniensis (strain DSM 17950 / CFBP 7177 / CIP 109463 / NCPPB 4357 / Et1/99).